Consider the following 203-residue polypeptide: Ribonuclease HII (203 aa).

An RNase H type-2 domain is found at 18-203 (GQYAGVDEVG…SFRPVREALA (186 aa)). Residues aspartate 24, glutamate 25, and aspartate 116 each coordinate a divalent metal cation.

This sequence belongs to the RNase HII family. Mn(2+) is required as a cofactor. Mg(2+) serves as cofactor.

It is found in the cytoplasm. It carries out the reaction Endonucleolytic cleavage to 5'-phosphomonoester.. Endonuclease that specifically degrades the RNA of RNA-DNA hybrids. This chain is Ribonuclease HII, found in Shewanella pealeana (strain ATCC 700345 / ANG-SQ1).